Here is a 93-residue protein sequence, read N- to C-terminus: Vacuolar ATPase assembly integral membrane protein VMA21 (93 aa).

Residues 1–21 (MSNRVSTGKMAMAPQESVQPA) are Cytoplasmic-facing. The helical transmembrane segment at 22-42 (VLYKLVLFALLMAVVPIGTYF) threads the bilayer. At 43 to 54 (STLNYLWDGSTT) the chain is on the lumenal side. The helical transmembrane segment at 55–75 (FAAISAIAAANLILVGYVVVA) threads the bilayer. Topologically, residues 76 to 93 (FREDAASRTGPLPEKKTS) are cytoplasmic. The short motif at 90-93 (KKTS) is the Prevents secretion from ER element.

Belongs to the VMA21 family.

The protein localises to the endoplasmic reticulum membrane. Its subcellular location is the endoplasmic reticulum-Golgi intermediate compartment membrane. It localises to the cytoplasmic vesicle. The protein resides in the COPII-coated vesicle membrane. Required for the assembly of the V0 complex of the vacuolar ATPase (V-ATPase) in the endoplasmic reticulum. The sequence is that of Vacuolar ATPase assembly integral membrane protein VMA21 from Cryptococcus neoformans var. neoformans serotype D (strain JEC21 / ATCC MYA-565) (Filobasidiella neoformans).